A 240-amino-acid polypeptide reads, in one-letter code: Ribonuclease PH (240 aa).

Phosphate is bound by residues Arg87 and 125 to 127; that span reads GTR.

Belongs to the RNase PH family. In terms of assembly, homohexameric ring arranged as a trimer of dimers.

The catalysed reaction is tRNA(n+1) + phosphate = tRNA(n) + a ribonucleoside 5'-diphosphate. Functionally, phosphorolytic 3'-5' exoribonuclease that plays an important role in tRNA 3'-end maturation. Removes nucleotide residues following the 3'-CCA terminus of tRNAs; can also add nucleotides to the ends of RNA molecules by using nucleoside diphosphates as substrates, but this may not be physiologically important. Probably plays a role in initiation of 16S rRNA degradation (leading to ribosome degradation) during starvation. The chain is Ribonuclease PH from Crocosphaera subtropica (strain ATCC 51142 / BH68) (Cyanothece sp. (strain ATCC 51142)).